We begin with the raw amino-acid sequence, 260 residues long: Snake venom serine protease KN6 (260 aa).

A signal peptide spans 1-18; sequence MVLIRVLANLLILQLSYA. Positions 19–24 are excised as a propeptide; it reads QKSSEL. A Peptidase S1 domain is found at 25–251; that stretch reads VIGGDECNIN…HLDWIQSIIA (227 aa). Disulfide bonds link Cys-31/Cys-165, Cys-100/Cys-258, Cys-144/Cys-212, Cys-176/Cys-191, and Cys-202/Cys-227. The Charge relay system role is filled by His-67. A glycan (N-linked (GlcNAc...) asparagine) is linked at Asn-105. Asp-112 functions as the Charge relay system in the catalytic mechanism. Asn-172 carries an N-linked (GlcNAc...) asparagine glycan. The active-site Charge relay system is Ser-206. Asn-213 and Asn-255 each carry an N-linked (GlcNAc...) asparagine glycan.

Belongs to the peptidase S1 family. Snake venom subfamily. Monomer. As to expression, expressed by the venom gland.

The protein resides in the secreted. Its function is as follows. Snake venom serine protease that may act in the hemostasis system of the prey. This Trimeresurus stejnegeri (Chinese green tree viper) protein is Snake venom serine protease KN6.